The following is a 283-amino-acid chain: MITHPQFDPVLISIGPLAVRWYALSYILGFILFTFLGRRRIAQGLSVFTKESLDDFLTWGILGVILGGRLGYVLFYKFSDYLAHPLDIFKVWEGGMSFHGGFLGVVIAIRLFGRKHGIGFLKLMDTVAPLVPLGLASGRIGNFINGELWGRVTDINAFWAMGFPQARYEDAEAAAHNPLWAEWLQQYGMLPRHPSQLYQFALEGICLFTVIWLFSKKQRSTGQVASLFLGGYGIFRFIAEFARQPDDYLGLLTLGLSMGQWLSVPMIVLGIVGFVRFGMKKQH.

3 consecutive transmembrane segments (helical) span residues 17–37, 56–76, and 88–108; these read LAVR…TFLG, FLTW…VLFY, and IFKV…VVIA. Residue arginine 139 coordinates a 1,2-diacyl-sn-glycero-3-phospho-(1'-sn-glycerol). A run of 2 helical transmembrane segments spans residues 222 to 242 and 255 to 275; these read GQVA…AEFA and GLSM…VGFV.

The protein belongs to the Lgt family.

Its subcellular location is the cell inner membrane. The enzyme catalyses L-cysteinyl-[prolipoprotein] + a 1,2-diacyl-sn-glycero-3-phospho-(1'-sn-glycerol) = an S-1,2-diacyl-sn-glyceryl-L-cysteinyl-[prolipoprotein] + sn-glycerol 1-phosphate + H(+). It functions in the pathway protein modification; lipoprotein biosynthesis (diacylglyceryl transfer). Its function is as follows. Catalyzes the transfer of the diacylglyceryl group from phosphatidylglycerol to the sulfhydryl group of the N-terminal cysteine of a prolipoprotein, the first step in the formation of mature lipoproteins. This is Phosphatidylglycerol--prolipoprotein diacylglyceryl transferase from Neisseria meningitidis serogroup B (strain ATCC BAA-335 / MC58).